We begin with the raw amino-acid sequence, 198 residues long: Small ribosomal subunit protein uS4 (198 aa).

The 63-residue stretch at 90–152 (TRLDNLVLRA…SRSNELFKEN (63 aa)) folds into the S4 RNA-binding domain.

Belongs to the universal ribosomal protein uS4 family. As to quaternary structure, part of the 30S ribosomal subunit. Contacts protein S5. The interaction surface between S4 and S5 is involved in control of translational fidelity.

One of the primary rRNA binding proteins, it binds directly to 16S rRNA where it nucleates assembly of the body of the 30S subunit. Functionally, with S5 and S12 plays an important role in translational accuracy. The polypeptide is Small ribosomal subunit protein uS4 (Finegoldia magna (strain ATCC 29328 / DSM 20472 / WAL 2508) (Peptostreptococcus magnus)).